Here is a 252-residue protein sequence, read N- to C-terminus: MASSSAKILLPLSLLFTLLSLSQSTNPNFILTLVNNCPYTIWPAIQPNAGHPVLERGGFTLHSLTHRSFPAPNAHWSGRIWARTGCNYQHGKFYCATGDCGGRIECDGLGGAAPATLAQFVLHHGHADFSTYGVSLVDGFNIPLTVTPHEGKGVCPVVGCRANLLESCPAVLQFRSHGGHGPVVGCKSACEAFKSDEFCCRNHYNSPQTCKPSSYSQFFKHACPATFTYAHDSPSLMHECSSPRELKVIFCH.

Residues 1–24 (MASSSAKILLPLSLLFTLLSLSQS) form the signal peptide.

The protein localises to the secreted. It is found in the cell wall. This is Osmotin-like protein from Solanum lycopersicum (Tomato).